A 441-amino-acid polypeptide reads, in one-letter code: Histidinol dehydrogenase (441 aa).

Threonine 240, glutamine 262, and histidine 265 together coordinate substrate. Positions 262 and 265 each coordinate Zn(2+). Active-site proton acceptor residues include glutamate 332 and histidine 333. Substrate is bound by residues histidine 333, aspartate 366, glutamate 420, and histidine 425. Zn(2+) is bound at residue aspartate 366. Histidine 425 lines the Zn(2+) pocket.

This sequence belongs to the histidinol dehydrogenase family. Zn(2+) serves as cofactor.

It carries out the reaction L-histidinol + 2 NAD(+) + H2O = L-histidine + 2 NADH + 3 H(+). It functions in the pathway amino-acid biosynthesis; L-histidine biosynthesis; L-histidine from 5-phospho-alpha-D-ribose 1-diphosphate: step 9/9. In terms of biological role, catalyzes the sequential NAD-dependent oxidations of L-histidinol to L-histidinaldehyde and then to L-histidine. This Streptomyces avermitilis (strain ATCC 31267 / DSM 46492 / JCM 5070 / NBRC 14893 / NCIMB 12804 / NRRL 8165 / MA-4680) protein is Histidinol dehydrogenase.